We begin with the raw amino-acid sequence, 95 residues long: Aspartyl/glutamyl-tRNA(Asn/Gln) amidotransferase subunit C (95 aa).

Belongs to the GatC family. As to quaternary structure, heterotrimer of A, B and C subunits.

It catalyses the reaction L-glutamyl-tRNA(Gln) + L-glutamine + ATP + H2O = L-glutaminyl-tRNA(Gln) + L-glutamate + ADP + phosphate + H(+). It carries out the reaction L-aspartyl-tRNA(Asn) + L-glutamine + ATP + H2O = L-asparaginyl-tRNA(Asn) + L-glutamate + ADP + phosphate + 2 H(+). Functionally, allows the formation of correctly charged Asn-tRNA(Asn) or Gln-tRNA(Gln) through the transamidation of misacylated Asp-tRNA(Asn) or Glu-tRNA(Gln) in organisms which lack either or both of asparaginyl-tRNA or glutaminyl-tRNA synthetases. The reaction takes place in the presence of glutamine and ATP through an activated phospho-Asp-tRNA(Asn) or phospho-Glu-tRNA(Gln). In Nitrobacter winogradskyi (strain ATCC 25391 / DSM 10237 / CIP 104748 / NCIMB 11846 / Nb-255), this protein is Aspartyl/glutamyl-tRNA(Asn/Gln) amidotransferase subunit C.